The chain runs to 212 residues: Pyridoxine/pyridoxamine 5'-phosphate oxidase (212 aa).

Substrate is bound by residues 8 to 11 and Lys-66; that span reads RREY. FMN is bound by residues 61–66, 76–77, Arg-82, Lys-83, and Gln-105; these read RIVLLK and FT. Residues Tyr-123, Arg-127, and Ser-131 each coordinate substrate. FMN contacts are provided by residues 140–141 and Trp-185; that span reads QS. Substrate is bound at residue 191–193; it reads RLH. Arg-195 is an FMN binding site.

It belongs to the pyridoxamine 5'-phosphate oxidase family. As to quaternary structure, homodimer. The cofactor is FMN.

The catalysed reaction is pyridoxamine 5'-phosphate + O2 + H2O = pyridoxal 5'-phosphate + H2O2 + NH4(+). It catalyses the reaction pyridoxine 5'-phosphate + O2 = pyridoxal 5'-phosphate + H2O2. Its pathway is cofactor metabolism; pyridoxal 5'-phosphate salvage; pyridoxal 5'-phosphate from pyridoxamine 5'-phosphate: step 1/1. The protein operates within cofactor metabolism; pyridoxal 5'-phosphate salvage; pyridoxal 5'-phosphate from pyridoxine 5'-phosphate: step 1/1. Functionally, catalyzes the oxidation of either pyridoxine 5'-phosphate (PNP) or pyridoxamine 5'-phosphate (PMP) into pyridoxal 5'-phosphate (PLP). This is Pyridoxine/pyridoxamine 5'-phosphate oxidase from Shewanella sp. (strain W3-18-1).